A 188-amino-acid polypeptide reads, in one-letter code: Peptidyl-prolyl cis-trans isomerase (188 aa).

Residues 1 to 20 form the signal peptide; sequence MLKRVAIVLGGLLISAHALA. Residues 21–181 enclose the PPIase cyclophilin-type domain; the sequence is NTMVEMKTNL…QPVKIISVQI (161 aa).

This sequence belongs to the cyclophilin-type PPIase family.

It is found in the periplasm. The enzyme catalyses [protein]-peptidylproline (omega=180) = [protein]-peptidylproline (omega=0). Functionally, PPIases accelerate the folding of proteins. It catalyzes the cis-trans isomerization of proline imidic peptide bonds in oligopeptides. This protein is not essential for growth. Presumably plays a role in signal transduction. The protein is Peptidyl-prolyl cis-trans isomerase (rotA) of Acinetobacter baylyi (strain ATCC 33305 / BD413 / ADP1).